The chain runs to 469 residues: UDP-N-acetylmuramate--L-alanine ligase (469 aa).

112-118 (GTHGKTT) contacts ATP.

This sequence belongs to the MurCDEF family.

Its subcellular location is the cytoplasm. It carries out the reaction UDP-N-acetyl-alpha-D-muramate + L-alanine + ATP = UDP-N-acetyl-alpha-D-muramoyl-L-alanine + ADP + phosphate + H(+). It functions in the pathway cell wall biogenesis; peptidoglycan biosynthesis. Functionally, cell wall formation. In Methylibium petroleiphilum (strain ATCC BAA-1232 / LMG 22953 / PM1), this protein is UDP-N-acetylmuramate--L-alanine ligase.